A 416-amino-acid chain; its full sequence is Phosphoglycerate kinase 2 (416 aa).

Residues D28–N30, R44, H65–R68, R122, and R162 contribute to the substrate site. ATP contacts are provided by residues E337 and G362–I365.

This sequence belongs to the phosphoglycerate kinase family. As to quaternary structure, monomer.

The protein localises to the cytoplasm. It carries out the reaction (2R)-3-phosphoglycerate + ATP = (2R)-3-phospho-glyceroyl phosphate + ADP. Its pathway is carbohydrate degradation; glycolysis; pyruvate from D-glyceraldehyde 3-phosphate: step 2/5. The sequence is that of Phosphoglycerate kinase 2 from Methanosarcina acetivorans (strain ATCC 35395 / DSM 2834 / JCM 12185 / C2A).